The sequence spans 693 residues: Triadin (693 aa).

At 1–47 (MTEITAEGNASTTTTVIDNKNGCIPKSPGKVLKRSVTEDIVTTFSSP) the chain is on the cytoplasmic side. Residues 48–68 (AAWLLVIALIITWSAVAIVMF) form a helical membrane-spanning segment. At 69-693 (DLVDYKNFSA…NSPGQKQQEQ (625 aa)) the chain is on the lumenal side. Acidic residues predominate over residues 117–130 (EGDEDDEDADEDID). Disordered regions lie at residues 117–260 (EGDE…AVHE), 278–649 (GDLK…QTRP), and 666–693 (FQFP…QQEQ). Composition is skewed to basic and acidic residues over residues 131–241 (KGEI…KETP) and 249–260 (KKDDKEMPAVHE). Ser-301 carries the post-translational modification Phosphoserine. Basic and acidic residues predominate over residues 305–352 (LEEKEKEEKKKMEKKDTSDTKKKEKEVKKKSEETTIDGKGKEPGKPPE). Over residues 354–364 (KQMTAKLTTQA) the composition is skewed to polar residues. Basic and acidic residues-rich tracts occupy residues 366 to 427 (ARKD…KEEI) and 438 to 502 (GKKE…KEAK). Asn-515 is a glycosylation site (N-linked (GlcNAc...) asparagine). 2 stretches are compositionally biased toward basic and acidic residues: residues 526–547 (VKPE…DKPK) and 558–579 (DSGK…REEN). The N-linked (GlcNAc...) asparagine glycan is linked to Asn-584. Positions 587–637 (KAEKPGKIPKDSKEAPASKKDKEDSKEAPTSKKDKEDSKDVPHSKKDKEVT) are enriched in basic and acidic residues. The span at 672-693 (PVQQPGENPGKTNSPGQKQQEQ) shows a compositional bias: polar residues.

As to quaternary structure, homooligomer of variable subunit number; disulfide-linked. Interacts with CASQ1 and RYR1 in skeletal muscle. Interacts with CASQ2. Phosphorylated by CaMK2. Post-translationally, N-glycosylated. Detected in heart (at protein level). Detected in heart.

Its subcellular location is the sarcoplasmic reticulum membrane. In terms of biological role, contributes to the regulation of lumenal Ca2+ release via the sarcoplasmic reticulum calcium release channels RYR1 and RYR2, a key step in triggering skeletal and heart muscle contraction. Required for normal organization of the triad junction, where T-tubules and the sarcoplasmic reticulum terminal cisternae are in close contact. Required for normal skeletal muscle strength. Plays a role in excitation-contraction coupling in the heart and in regulating the rate of heart beats. This is Triadin from Mus musculus (Mouse).